Here is a 967-residue protein sequence, read N- to C-terminus: Haze protective factor 1 (967 aa).

Residues 1-23 (MFNRFNKLQAALALVLYSQSALG) form the signal peptide. N-linked (GlcNAc...) asparagine glycans are attached at residues Asn-28 and Asn-35. The disordered stretch occupies residues 72–301 (SSSTEVSSSI…STSSASTASG (230 aa)). 9 consecutive repeat copies span residues 93–105 (SITS…SGSS), 106–118 (SITS…SSSS), 119–131 (SATE…SGSS), 132–144 (SATE…SGSS), 153–165 (SATE…SGST), 166–178 (SATE…SGSS), 179–191 (SATE…SGSS), 192–204 (SATE…SGSS), and 205–217 (SATE…SGSS). Residues 93–278 (SITSSGSSVS…QSGSSVSGSS (186 aa)) are 13 X approximate repeats, Ser-rich. The stretch at 218-230 (SATESGSASSVPS) is one 1-10; approximate repeat. Residues 234–247 (SVTESGSSSSASES) form a 1-11; approximate repeat. One copy of the 1-12; approximate repeat lies at 248-259 (SITQSGTASGSS). The 1-13 repeat unit spans residues 266 to 278 (SVTQSGSSVSGSS). 3 N-linked (GlcNAc...) asparagine glycosylation sites follow: Asn-493, Asn-601, and Asn-638. 4 tandem repeats follow at residues 745 to 780 (SSKS…ATTT), 781 to 815 (SPKS…TTTV), 816 to 854 (SPKT…ETSA), and 855 to 893 (APKT…ATSA). The tract at residues 745–902 (SSKSYTTVTV…ASPKSYTTVT (158 aa)) is 4.5 X approximate tandem repeats, Thr-rich. The segment at 836–857 (KTVTSEAPKETSETSETSAAPK) is disordered. The stretch at 894-902 (SPKSYTTVT) is one 2-5; truncated repeat. The GPI-anchor amidated alanine moiety is linked to residue Ala-946. Residues 947 to 967 (AGLNANTLNALVGIFVLAFFN) constitute a propeptide, removed in mature form.

This sequence belongs to the SRP1/TIP1 family. The GPI-anchor is attached to the protein in the endoplasmic reticulum and serves to target the protein to the cell surface. There, the glucosamine-inositol phospholipid moiety is cleaved off and the GPI-modified mannoprotein is covalently attached via its lipidless GPI glycan remnant to the 1,6-beta-glucan of the outer cell wall layer.

It is found in the secreted. It localises to the cell wall. Its subcellular location is the membrane. In terms of biological role, involved in cell wall organization and biosynthesis. In Saccharomyces cerevisiae (strain ATCC 204508 / S288c) (Baker's yeast), this protein is Haze protective factor 1 (HPF1).